We begin with the raw amino-acid sequence, 183 residues long: UPF0398 protein MCCL_1095 (183 aa).

It belongs to the UPF0398 family.

This Macrococcus caseolyticus (strain JCSC5402) (Macrococcoides caseolyticum) protein is UPF0398 protein MCCL_1095.